We begin with the raw amino-acid sequence, 341 residues long: Methionine import ATP-binding protein MetN 1 (341 aa).

One can recognise an ABC transporter domain in the interval I2–V241. Residue G38–S45 coordinates ATP.

This sequence belongs to the ABC transporter superfamily. Methionine importer (TC 3.A.1.24) family. In terms of assembly, the complex is composed of two ATP-binding proteins (MetN), two transmembrane proteins (MetI) and a solute-binding protein (MetQ).

It localises to the cell membrane. It catalyses the reaction L-methionine(out) + ATP + H2O = L-methionine(in) + ADP + phosphate + H(+). The enzyme catalyses D-methionine(out) + ATP + H2O = D-methionine(in) + ADP + phosphate + H(+). In terms of biological role, part of the ABC transporter complex MetNIQ involved in methionine import. Responsible for energy coupling to the transport system. The polypeptide is Methionine import ATP-binding protein MetN 1 (Staphylococcus aureus (strain USA300)).